A 331-amino-acid polypeptide reads, in one-letter code: UPF0194 membrane protein YbhG (331 aa).

The signal sequence occupies residues 1–19 (MKKPVVIGLAIAAIVAVIA). A coiled-coil region spans residues 107 to 208 (EEIAQAAAAV…LDLQDTTLIA (102 aa)).

It belongs to the UPF0194 family.

The protein resides in the periplasm. This chain is UPF0194 membrane protein YbhG, found in Salmonella gallinarum (strain 287/91 / NCTC 13346).